We begin with the raw amino-acid sequence, 430 residues long: Zinc finger and SCAN domain-containing protein 4 (430 aa).

Residues 1–38 form a disordered region; it reads MASDLRISFQGEPSRNDPGSENLEHKPSQGPAVQEEEE. Residues 44–126 enclose the SCAN box domain; the sequence is RTQLSLLQNS…KFMEDLTDES (83 aa). Positions 164–185 are enriched in polar residues; that stretch reads GSPTGTDMETPSWTPQDTSLET. Disordered stretches follow at residues 164 to 196, 224 to 257, and 281 to 300; these read GSPTGTDMETPSWTPQDTSLETGQGEWGDKENG, YPRPEEDSVSLKNPLSSRKAGLGMSGSQEGSLKG, and EPVPTHQRTEGNSTRGGHQE. 4 consecutive C2H2-type zinc fingers follow at residues 309-331, 337-359, 365-387, and 393-415; these read YRCEKCPKIFRYFSQLKAHQRRH, FTCAECNRGFFQASDLHVHQKIH, FTCSTCEKSFSHKTNLLAHERIH, and YECSLCHRSYRQSSTYHRHLRNH.

The protein resides in the nucleus. It localises to the chromosome. The protein localises to the telomere. In terms of biological role, embryonic stem (ES) cell-specific transcription factor required to regulate ES cell pluripotency. Binds telomeres and plays a key role in genomic stability in ES cells by regulating telomere elongation. Acts as an activator of spontaneous telomere sister chromatid exchange (T-SCE) and telomere elongation in undifferentiated ES cells. In Ailuropoda melanoleuca (Giant panda), this protein is Zinc finger and SCAN domain-containing protein 4 (ZSCAN4).